Consider the following 88-residue polypeptide: Small ribosomal subunit protein bS20 (88 aa).

The tract at residues 1–25 (MANTAQALKRIRQTNKARAQNASQR) is disordered. Residues 16-25 (KARAQNASQR) are compositionally biased toward polar residues.

This sequence belongs to the bacterial ribosomal protein bS20 family.

Functionally, binds directly to 16S ribosomal RNA. This Dichelobacter nodosus (strain VCS1703A) protein is Small ribosomal subunit protein bS20.